We begin with the raw amino-acid sequence, 160 residues long: Eosinophil cationic protein (160 aa).

Residues 1–27 (MVPKLFTSQICLLLLLGLSGVGGSLHA) form the signal peptide. The interval 28–72 (KPRQFTRAQWFAIQHVSLNPPQCTTAMRVINNYQRRCKDQNTFLR) is required for nearly all of the bactericidal activities; partially involved in LPS-binding. Histidine 42 acts as the Proton acceptor in catalysis. Disulfide bonds link cysteine 50-cysteine 110, cysteine 64-cysteine 123, cysteine 82-cysteine 138, and cysteine 89-cysteine 98. At tyrosine 60 the chain carries 3'-nitrotyrosine. A substrate-binding site is contributed by 65–69 (KDQNT). N-linked (GlcNAc...) asparagine glycans are attached at residues asparagine 86, asparagine 92, asparagine 111, and asparagine 119. Catalysis depends on histidine 155, which acts as the Proton donor.

This sequence belongs to the pancreatic ribonuclease family. As to quaternary structure, interacts with bacterial lipopolysaccharide (LPS) and lipoteichoic acid (LTA). In vitro interacts with phospholipid bilayers.

The protein localises to the secreted. Its function is as follows. Cytotoxin and helminthotoxin with low-efficiency ribonuclease activity. Possesses a wide variety of biological activities. Exhibits antibacterial activity. The chain is Eosinophil cationic protein (RNASE3) from Pongo pygmaeus (Bornean orangutan).